The sequence spans 280 residues: Urease accessory protein UreD 3 (280 aa).

This sequence belongs to the UreD family. In terms of assembly, ureD, UreF and UreG form a complex that acts as a GTP-hydrolysis-dependent molecular chaperone, activating the urease apoprotein by helping to assemble the nickel containing metallocenter of UreC. The UreE protein probably delivers the nickel.

It is found in the cytoplasm. Required for maturation of urease via the functional incorporation of the urease nickel metallocenter. The polypeptide is Urease accessory protein UreD 3 (Bradyrhizobium sp. (strain ORS 278)).